Consider the following 558-residue polypeptide: 2-isopropylmalate synthase (558 aa).

The 277-residue stretch at 28 to 304 (PIWCSVDLRD…DPELEFSNLN (277 aa)) folds into the Pyruvate carboxyltransferase domain. Residues Asp-37, His-243, His-245, and Asn-279 each contribute to the Mg(2+) site. The regulatory domain stretch occupies residues 438 to 558 (NRSPYYLKNY…VSALNRSKLK (121 aa)).

This sequence belongs to the alpha-IPM synthase/homocitrate synthase family. LeuA type 2 subfamily. Homodimer. Requires Mg(2+) as cofactor.

The protein localises to the cytoplasm. It catalyses the reaction 3-methyl-2-oxobutanoate + acetyl-CoA + H2O = (2S)-2-isopropylmalate + CoA + H(+). Its pathway is amino-acid biosynthesis; L-leucine biosynthesis; L-leucine from 3-methyl-2-oxobutanoate: step 1/4. Functionally, catalyzes the condensation of the acetyl group of acetyl-CoA with 3-methyl-2-oxobutanoate (2-ketoisovalerate) to form 3-carboxy-3-hydroxy-4-methylpentanoate (2-isopropylmalate). The sequence is that of 2-isopropylmalate synthase from Clostridium acetobutylicum (strain ATCC 824 / DSM 792 / JCM 1419 / IAM 19013 / LMG 5710 / NBRC 13948 / NRRL B-527 / VKM B-1787 / 2291 / W).